The sequence spans 358 residues: uncharacterized protein (358 aa).

The tract at residues 324–358 (DMEVEETPPTTNKDLPRGATQPKRNSIKRVSKLID) is disordered. Positions 348 to 358 (NSIKRVSKLID) are enriched in basic residues.

This is an uncharacterized protein from Mycoplasma pneumoniae (strain ATCC 29342 / M129 / Subtype 1) (Mycoplasmoides pneumoniae).